A 214-amino-acid polypeptide reads, in one-letter code: Thymidylate kinase (214 aa).

Residue Gly-7–Arg-14 coordinates ATP. Asp-9, Tyr-39, Phe-70, Arg-74, Arg-95, Asn-100, and Tyr-103 together coordinate dTMP. Residue Asp-9 coordinates Mg(2+). Positions Gly-147–Gly-159 are LID. Asp-163 and Tyr-165 together coordinate dTMP. Mg(2+) is bound at residue Glu-166.

Belongs to the thymidylate kinase family. Homodimer. Mg(2+) serves as cofactor.

The enzyme catalyses dTMP + ATP = dTDP + ADP. It participates in pyrimidine metabolism; dTTP biosynthesis. Functionally, catalyzes the reversible phosphorylation of deoxythymidine monophosphate (dTMP) to deoxythymidine diphosphate (dTDP), using ATP as its preferred phosphoryl donor. Situated at the junction of both de novo and salvage pathways of deoxythymidine triphosphate (dTTP) synthesis, is essential for DNA synthesis and cellular growth. The sequence is that of Thymidylate kinase (tmk) from Mycobacterium tuberculosis (strain CDC 1551 / Oshkosh).